An 80-amino-acid polypeptide reads, in one-letter code: Large ribosomal subunit protein uL24 (80 aa).

Residues 53-80 (HMRPTQSNPQGSIIEREFPIHASNVKKS) are disordered.

It belongs to the universal ribosomal protein uL24 family. As to quaternary structure, part of the 50S ribosomal subunit.

One of two assembly initiator proteins, it binds directly to the 5'-end of the 23S rRNA, where it nucleates assembly of the 50S subunit. In terms of biological role, one of the proteins that surrounds the polypeptide exit tunnel on the outside of the subunit. The chain is Large ribosomal subunit protein uL24 from Chlorobium luteolum (strain DSM 273 / BCRC 81028 / 2530) (Pelodictyon luteolum).